We begin with the raw amino-acid sequence, 231 residues long: Antiholin-like protein LrgB (231 aa).

The next 5 membrane-spanning stretches (helical) occupy residues 7-24 (PYFG…GTFL), 34-56 (FTPL…FSYA), 91-113 (WWQI…YLLA), 149-171 (ITAF…FLKV), and 207-229 (ASIA…VQLI).

It belongs to the CidB/LrgB family. LrgB subfamily.

It is found in the cell membrane. In terms of biological role, inhibits the expression or activity of extracellular murein hydrolases by interacting, possibly with LrgA, with the holin-like protein CidA. The LrgAB and CidA proteins may affect the proton motive force of the membrane. May be involved in programmed cell death (PCD), possibly triggering PCD in response to antibiotics and environmental stresses. In Bacillus subtilis (strain 168), this protein is Antiholin-like protein LrgB.